We begin with the raw amino-acid sequence, 267 residues long: Putative carboxymethylenebutenolidase (267 aa).

Catalysis depends on residues Cys-137, Asp-194, and His-226.

This sequence belongs to the dienelactone hydrolase family.

It catalyses the reaction 2-(5-oxo-2,5-dihydrofuran-2-ylidene)acetate + H2O = 4-oxohex-2-enedioate + H(+). The chain is Putative carboxymethylenebutenolidase from Yersinia pestis.